We begin with the raw amino-acid sequence, 40 residues long: Sulfur globule protein TR0 (40 aa).

The protein to C.vinosum CV1 and CV2. The protein envelope of the sulfur globules is composed of the three different proteins TR0, TR1 and TR2.

Its function is as follows. Structural protein of the sulfur globules, which are intracellular globules that serve for sulfur storage in purple sulfur bacteria. In Thiocapsa roseopersicina, this protein is Sulfur globule protein TR0.